An 89-amino-acid chain; its full sequence is Terminase, small subunit gp18 (89 aa).

Residues 1–48 (MEKDKSLITFLEMLDTAMAQRMLADLSDHERRSPQLYNAINKLLDRHK) form a helix-turn-helix (HTH) region.

This sequence belongs to the terminase small subunit family. Homooctamer. Interacts with the terminase large subunit gp19; the active complex is probably heterooligomeric.

In terms of biological role, plays a role in packaging a single copy of genome into the prohead. The terminase is composed of two subunits (a large and a small) and the small subunit recognizes a specific sequence in the viral DNA. Once the DNA is packaged, the terminase detaches from the connector and the tail replaces it to finish maturation of the virion. Packaging initiates by TerS recognizing the packaging sequence in the viral DNA. The nuclease activity of TerL cuts the viral DNA and the terminase-DNA complex binds to the portal of a procapsid shell. DNA is translocated into the capsid, powered by the packaging ATPase in TerL, which continues until the next site is encountered at which point the motor stops and again cuts the DNA to release the nucleocapsid filled with a unit-length genome ('unit length' packaging). Direct short terminal repeats at each end of the genome are duplicated in concert with packaging. This is Terminase, small subunit gp18 from Escherichia coli (Bacteriophage T7).